A 1011-amino-acid polypeptide reads, in one-letter code: Probable calcium-transporting ATPase (1011 aa).

The Cytoplasmic portion of the chain corresponds to 1 to 65; that stretch reads MLPENLPTDP…WKLVLAQFED (65 aa). Residues 66-84 traverse the membrane as a helical segment; the sequence is TLVRILLLAATVSFAMAVV. Residues 85–90 are Extracellular-facing; the sequence is ENNAAD. The helical transmembrane segment at 91 to 110 threads the bilayer; sequence FVEPFIILLILILNATVGVW. Residues 111 to 258 lie on the Cytoplasmic side of the membrane; the sequence is QENRAEGAIE…QVKLDEFGVL (148 aa). The helical transmembrane segment at 259-278 threads the bilayer; sequence LSKVIGYICLVVFAVNLVRW. The Extracellular segment spans residues 279–303; sequence YATHKPTKNETFFTRYIQPSVHCLK. The helical transmembrane segment at 304–321 threads the bilayer; sequence VAVALAVAAIPEGLPAVV. Residues 322–770 lie on the Cytoplasmic side of the membrane; the sequence is TTCLALGTRR…RYLISSNIGE (449 aa). Asp-357 functions as the 4-aspartylphosphate intermediate in the catalytic mechanism. Position 514 (Lys-514) interacts with ATP. A helical membrane pass occupies residues 771–794; sequence VVCILVTGLFGLPEALSPVQLLWV. The Extracellular portion of the chain corresponds to 795 to 835; sequence NLVTDGLPATALGFNAPDRDIMEQRPRRMEEPIVNGWLFMR. Residues 836–856 traverse the membrane as a helical segment; sequence YMVIGVYVGLATVGGFLWWFL. Topologically, residues 857-885 are cytoplasmic; that stretch reads RHGFSWHDLTTYTACSDMTNGTCLLLANP. A helical membrane pass occupies residues 886-905; sequence QTARAIALSILVVVEMLNAL. The Extracellular portion of the chain corresponds to 906–922; the sequence is NALSENASLIVSRPSSN. The helical transmembrane segment at 923–942 threads the bilayer; sequence VWLLFAIFSSLSLHLIIMYV. Over 943–1011 the chain is Cytoplasmic; it reads PFFAKLFNIV…MEKAQEKKKD (69 aa).

It belongs to the cation transport ATPase (P-type) (TC 3.A.3) family.

It is found in the flagellar pocket. The protein resides in the cell membrane. The catalysed reaction is Ca(2+)(in) + ATP + H2O = Ca(2+)(out) + ADP + phosphate + H(+). Its function is as follows. This magnesium-dependent enzyme catalyzes the hydrolysis of ATP coupled with the transport of the calcium. The polypeptide is Probable calcium-transporting ATPase (TBA1) (Trypanosoma brucei brucei).